The following is a 356-amino-acid chain: Butyrate kinase (356 aa).

Belongs to the acetokinase family.

Its subcellular location is the cytoplasm. It carries out the reaction butanoate + ATP = butanoyl phosphate + ADP. It functions in the pathway lipid metabolism; butanoate metabolism. Catalyzes the conversion of butyryl-CoA through butyryl phosphate to butyrate. In Clostridium perfringens (strain ATCC 13124 / DSM 756 / JCM 1290 / NCIMB 6125 / NCTC 8237 / Type A), this protein is Butyrate kinase (buk).